The primary structure comprises 436 residues: UDP-N-acetylmuramate--L-alanine ligase (436 aa).

111 to 117 (GTHGKTS) lines the ATP pocket.

The protein belongs to the MurCDEF family.

Its subcellular location is the cytoplasm. The catalysed reaction is UDP-N-acetyl-alpha-D-muramate + L-alanine + ATP = UDP-N-acetyl-alpha-D-muramoyl-L-alanine + ADP + phosphate + H(+). It participates in cell wall biogenesis; peptidoglycan biosynthesis. In terms of biological role, cell wall formation. In Pediococcus pentosaceus (strain ATCC 25745 / CCUG 21536 / LMG 10740 / 183-1w), this protein is UDP-N-acetylmuramate--L-alanine ligase.